The following is a 317-amino-acid chain: Protoheme IX farnesyltransferase (317 aa).

7 helical membrane passes run 33-53, 54-74, 117-137, 154-174, 181-201, 242-262, and 285-305; these read VMSL…GEIN, PILG…SGAL, VILG…TIFF, IVIG…CVTG, VILF…LALF, FFTG…SAIF, and MFAY…ADHF.

The protein belongs to the UbiA prenyltransferase family. Protoheme IX farnesyltransferase subfamily.

It is found in the cell inner membrane. The catalysed reaction is heme b + (2E,6E)-farnesyl diphosphate + H2O = Fe(II)-heme o + diphosphate. The protein operates within porphyrin-containing compound metabolism; heme O biosynthesis; heme O from protoheme: step 1/1. Converts heme B (protoheme IX) to heme O by substitution of the vinyl group on carbon 2 of heme B porphyrin ring with a hydroxyethyl farnesyl side group. The protein is Protoheme IX farnesyltransferase of Agrobacterium fabrum (strain C58 / ATCC 33970) (Agrobacterium tumefaciens (strain C58)).